Here is a 412-residue protein sequence, read N- to C-terminus: Argininosuccinate synthase (412 aa).

ATP is bound by residues 24 to 32 (AFSGGLDTS) and Ala50. Residues Tyr103 and Ser108 each coordinate L-citrulline. An ATP-binding site is contributed by Gly132. L-aspartate-binding residues include Thr134, Asn138, and Asp139. Asn138 is an L-citrulline binding site. An L-citrulline-binding site is contributed by Arg142.

The protein belongs to the argininosuccinate synthase family. Type 1 subfamily. As to quaternary structure, homotetramer.

The protein localises to the cytoplasm. The enzyme catalyses L-citrulline + L-aspartate + ATP = 2-(N(omega)-L-arginino)succinate + AMP + diphosphate + H(+). Its pathway is amino-acid biosynthesis; L-arginine biosynthesis; L-arginine from L-ornithine and carbamoyl phosphate: step 2/3. This Xanthomonas axonopodis pv. citri (strain 306) protein is Argininosuccinate synthase.